A 560-amino-acid polypeptide reads, in one-letter code: Membrane-bound O-acyltransferase GUP1 (560 aa).

Over 1 to 43 the chain is Extracellular; that stretch reads MSLISILSPLITSEGLDSRIKPSPKKDASTTTKPSLWKTTEFK. A helical transmembrane segment spans residues 44-64; the sequence is FYYIAFLVVVPLMFYAGLQAS. The Cytoplasmic segment spans residues 65–101; it reads SPENPNYARYERLLSQGWLFGRKVDNSDSQYRFFRDN. Residues 102–122 form a helical membrane-spanning segment; it reads FALLSVLMLVHTSIKRIVLYS. Residues 123–131 are Extracellular-facing; sequence TNITKLRFD. The chain crosses the membrane as a helical span at residues 132-152; it reads LIFGLIFLVAAHGVNSIRILA. The Cytoplasmic portion of the chain corresponds to 153–165; that stretch reads HMLILYAIAHVLK. A helical membrane pass occupies residues 166-185; that stretch reads NFRRIATISIWIYGISTLFI. At 186 to 276 the chain is on the extracellular side; that stretch reads NDNFRAYPFG…AAHPIQDYSL (91 aa). Residues 277 to 297 traverse the membrane as a helical segment; sequence MNYIAYVTYTPLFIAGPIITF. Residues 298 to 322 lie on the Cytoplasmic side of the membrane; that stretch reads NDYVYQSKHTLPSINFKFIFYYAVR. The chain crosses the membrane as a helical span at residues 323 to 343; the sequence is FVIALLSMEFILHFLHVVAIS. The Extracellular segment spans residues 344–352; it reads KTKAWENDT. A helical membrane pass occupies residues 353–373; it reads PFQISMIGLFNLNIIWLKLLI. Residues 374–432 lie on the Cytoplasmic side of the membrane; the sequence is PWRLFRLWALLDGIDTPENMIRCVDNNYSSLAFWRAWHRSYNKWVVRYIYIPLGGSKNR. The next 2 helical transmembrane spans lie at 433 to 453 and 454 to 474; these read VLTS…ELKL and LLWG…TQIF. H447 is a catalytic residue. At 475–485 the chain is on the cytoplasmic side; the sequence is SHYTDAVWYRH. A helical membrane pass occupies residues 486-506; it reads VCAVGAVFNIWVMMIANLFGF. Topologically, residues 507-526 are extracellular; that stretch reads CLGSDGTKKLLSDMFCTVSG. Residues 527–547 traverse the membrane as a helical segment; the sequence is FKFVILASVSLFIAVQIMFEI. Topologically, residues 548–560 are cytoplasmic; it reads REEEKRHGIYLKC.

This sequence belongs to the membrane-bound acyltransferase family. As to quaternary structure, interacts with mitochondrial outer membrane voltage-dependent anion channel (VDAC) POR1.

The protein resides in the cell membrane. It is found in the endoplasmic reticulum membrane. The protein localises to the mitochondrion membrane. In terms of biological role, membrane-bound O-acyltransferase involved in the remodeling of glycosylphosphatidylinositol (GPI) anchors. Acts only on GPI-anchored proteins, but not on free GPI lipids. Acts as an acyltransferase for GPI anchors that adds C26 fatty acids to the sn2 position of lyso-PI-containing GPI anchors. PER1 first deacylates, GUP1 subsequently reacylates the anchor lipid, thus replacing a shorter fatty acid (C16:0 or C18:0) by C26:0. Also involved in lipid metabolism, having profound effects on sphingolipid-sterol-ordered domains integrity and assembly. Together with GUP2, has an influence on the chemical composition of the yeast extracellular matrix (yECM) in yeast multicellular aggregates, such as biofilms and colonies. Involved in cell integrity and apoptosis. This is Membrane-bound O-acyltransferase GUP1 (GUP1) from Saccharomyces cerevisiae (strain ATCC 204508 / S288c) (Baker's yeast).